A 428-amino-acid chain; its full sequence is Histidine--tRNA ligase (428 aa).

The protein belongs to the class-II aminoacyl-tRNA synthetase family. In terms of assembly, homodimer.

It localises to the cytoplasm. It catalyses the reaction tRNA(His) + L-histidine + ATP = L-histidyl-tRNA(His) + AMP + diphosphate + H(+). The polypeptide is Histidine--tRNA ligase (Mesomycoplasma hyopneumoniae (strain 232) (Mycoplasma hyopneumoniae)).